Here is a 159-residue protein sequence, read N- to C-terminus: Ribosomal RNA large subunit methyltransferase H (159 aa).

S-adenosyl-L-methionine contacts are provided by residues Leu-76, Gly-107, and 126–131; that span reads LSKLTM.

Belongs to the RNA methyltransferase RlmH family. Homodimer.

The protein localises to the cytoplasm. The enzyme catalyses pseudouridine(1915) in 23S rRNA + S-adenosyl-L-methionine = N(3)-methylpseudouridine(1915) in 23S rRNA + S-adenosyl-L-homocysteine + H(+). In terms of biological role, specifically methylates the pseudouridine at position 1915 (m3Psi1915) in 23S rRNA. The polypeptide is Ribosomal RNA large subunit methyltransferase H (Acinetobacter baylyi (strain ATCC 33305 / BD413 / ADP1)).